The primary structure comprises 427 residues: Ribosome biogenesis protein WDR12 homolog (427 aa).

Residues 13–97 (LQLHLYTKQK…EDTVELEYVE (85 aa)) form a ubiquitin-like (UBL) domain region. 7 WD repeats span residues 109-146 (LHDDWVSAVEAKDNWILTGCYDNTLNIWTTKGKHKLTI), 148-190 (GHIA…NSVE), 197-236 (GHERGVDCIAANRSKTRMATGSWDTMLKIWSTDVRNDGDS), 260-298 (GHRECISGVQWIDDNTLVTSSWDHTIKIWDLALSGIKSE), 301-339 (GHKSFFDLSYSHLNGLIIAASPDKNLRLYDPKSNQGTIV), 345-385 (GHTQ…APIF), and 389-427 (GHEDKVLACDWSNPKFILSGGSDNSVRVFKSKIAIGEQK).

The protein belongs to the WD repeat WDR12/YTM1 family.

It localises to the nucleus. It is found in the nucleolus. The protein resides in the nucleoplasm. Its function is as follows. Required for maturation of ribosomal RNAs and formation of the large ribosomal subunit. The protein is Ribosome biogenesis protein WDR12 homolog of Aedes aegypti (Yellowfever mosquito).